We begin with the raw amino-acid sequence, 140 residues long: Pro-vaccinia growth factor (140 aa).

Positions 1 to 18 (MLINYLMLLFAAMIIRSF) are cleaved as a signal peptide. Residues 19–100 (ADSGNAIETT…SEKPNTTTSY (82 aa)) lie on the Extracellular side of the membrane. Asn34 is a glycosylation site (N-linked (GlcNAc...) asparagine; by host). The EGF-like domain occupies 41 to 81 (AIRLCGPEGDGYCLHGDCIHARDIDGMYCRCSHGYTGIRCQ). 3 disulfide bridges follow: Cys45–Cys58, Cys53–Cys69, and Cys71–Cys80. The N-linked (GlcNAc...) asparagine; by host glycan is linked to Asn95. The chain crosses the membrane as a helical span at residues 101 to 121 (IPSPGIMLVLVGIIIITCCLL). Over 122–140 (SVYRFTRRTKLPIQDMVVP) the chain is Cytoplasmic.

It belongs to the orthopoxvirus OPG019 family. As to quaternary structure, interacts with host EGFR.

The protein resides in the host membrane. The protein localises to the secreted. Its function is as follows. Stimulates cellular proliferation (hyperplasia)and mobility around infected cells to promote rapid and efficient spread of infection. This effect is beneficial for virus replication in vivo, because poxviruses replicate possibly better in proliferating cells than in quiescent cells. Acts by binding host EGFR, inducing its dimerization, autophosphorylation and leading to activation of several cellular pathways regulating cell proliferation or cell survival. The activation by host EGFR of mitogen activated protein kinases (MAPK) and extracellular-signal regulated kinases (ERK) are essential for the positive effect of vaccinia growth factor on poxvirus virulence in vivo. The protein is Pro-vaccinia growth factor (OPG019) of Homo sapiens (Human).